The sequence spans 484 residues: Chromosomal replication initiator protein DnaA (484 aa).

Residues 1–73 (MQEGKNIWSL…EILTEKGHNT (73 aa)) are domain I, interacts with DnaA modulators. The domain II stretch occupies residues 73-140 (TINVEFINPP…EDIHTKYRNP (68 aa)). The domain III, AAA+ region stretch occupies residues 141–357 (FLKKKYTFEN…AAVTKLKAHI (217 aa)). ATP contacts are provided by Gly185, Gly187, Lys188, and Thr189. A domain IV, binds dsDNA region spans residues 358–484 (DLEDIEIDTS…IELMNKINKN (127 aa)).

Belongs to the DnaA family. Oligomerizes as a right-handed, spiral filament on DNA at oriC.

The protein resides in the cytoplasm. In terms of biological role, plays an essential role in the initiation and regulation of chromosomal replication. ATP-DnaA binds to the origin of replication (oriC) to initiate formation of the DNA replication initiation complex once per cell cycle. Binds the DnaA box (a 9 base pair repeat at the origin) and separates the double-stranded (ds)DNA. Forms a right-handed helical filament on oriC DNA; dsDNA binds to the exterior of the filament while single-stranded (ss)DNA is stabiized in the filament's interior. The ATP-DnaA-oriC complex binds and stabilizes one strand of the AT-rich DNA unwinding element (DUE), permitting loading of DNA polymerase. After initiation quickly degrades to an ADP-DnaA complex that is not apt for DNA replication. Binds acidic phospholipids. The sequence is that of Chromosomal replication initiator protein DnaA from Borrelia turicatae (strain 91E135).